We begin with the raw amino-acid sequence, 359 residues long: S-adenosylmethionine:tRNA ribosyltransferase-isomerase (359 aa).

It belongs to the QueA family. As to quaternary structure, monomer.

The protein localises to the cytoplasm. The catalysed reaction is 7-aminomethyl-7-carbaguanosine(34) in tRNA + S-adenosyl-L-methionine = epoxyqueuosine(34) in tRNA + adenine + L-methionine + 2 H(+). The protein operates within tRNA modification; tRNA-queuosine biosynthesis. Transfers and isomerizes the ribose moiety from AdoMet to the 7-aminomethyl group of 7-deazaguanine (preQ1-tRNA) to give epoxyqueuosine (oQ-tRNA). The chain is S-adenosylmethionine:tRNA ribosyltransferase-isomerase from Colwellia psychrerythraea (strain 34H / ATCC BAA-681) (Vibrio psychroerythus).